The following is a 270-amino-acid chain: tRNA pseudouridine synthase A (270 aa).

D60 (nucleophile) is an active-site residue. Positions 107–111 are RNA binding; it reads FHARF. Position 118 (Y118) interacts with substrate. Residues 168–172 form an interaction with tRNA region; the sequence is QCQSR.

Belongs to the tRNA pseudouridine synthase TruA family. As to quaternary structure, homodimer.

The enzyme catalyses uridine(38/39/40) in tRNA = pseudouridine(38/39/40) in tRNA. Functionally, formation of pseudouridine at positions 38, 39 and 40 in the anticodon stem and loop of transfer RNAs. The protein is tRNA pseudouridine synthase A of Klebsiella pneumoniae subsp. pneumoniae (strain ATCC 700721 / MGH 78578).